The sequence spans 296 residues: 4-hydroxybenzoate octaprenyltransferase (296 aa).

The next 8 helical transmembrane spans lie at isoleucine 23 to tryptophan 43, glycine 46 to methionine 66, leucine 99 to valine 119, isoleucine 141 to isoleucine 161, glycine 163 to tyrosine 183, aspartate 211 to valine 231, tryptophan 237 to isoleucine 257, and cysteine 265 to alanine 285.

This sequence belongs to the UbiA prenyltransferase family. The cofactor is Mg(2+).

Its subcellular location is the cell inner membrane. It catalyses the reaction all-trans-octaprenyl diphosphate + 4-hydroxybenzoate = 4-hydroxy-3-(all-trans-octaprenyl)benzoate + diphosphate. The protein operates within cofactor biosynthesis; ubiquinone biosynthesis. Functionally, catalyzes the prenylation of para-hydroxybenzoate (PHB) with an all-trans polyprenyl group. Mediates the second step in the final reaction sequence of ubiquinone-8 (UQ-8) biosynthesis, which is the condensation of the polyisoprenoid side chain with PHB, generating the first membrane-bound Q intermediate 3-octaprenyl-4-hydroxybenzoate. The protein is 4-hydroxybenzoate octaprenyltransferase of Methylobacillus flagellatus (strain ATCC 51484 / DSM 6875 / VKM B-1610 / KT).